The sequence spans 752 residues: Multifunctional tryptophan biosynthesis protein (752 aa).

The Glutamine amidotransferase type-1 domain maps to N23–N223. An L-glutamine-binding site is contributed by G74–G76. C102 functions as the Nucleophile; for GATase activity in the catalytic mechanism. Residues Q106 and S152–L153 each bind L-glutamine. Active-site for GATase activity residues include H197 and E199. The indole-3-glycerol phosphate synthase stretch occupies residues I239–L503. An N-(5'-phosphoribosyl)anthranilate isomerase region spans residues L519–Q752.

The catalysed reaction is N-(5-phospho-beta-D-ribosyl)anthranilate = 1-(2-carboxyphenylamino)-1-deoxy-D-ribulose 5-phosphate. It catalyses the reaction 1-(2-carboxyphenylamino)-1-deoxy-D-ribulose 5-phosphate + H(+) = (1S,2R)-1-C-(indol-3-yl)glycerol 3-phosphate + CO2 + H2O. It carries out the reaction chorismate + L-glutamine = anthranilate + pyruvate + L-glutamate + H(+). It functions in the pathway amino-acid biosynthesis; L-tryptophan biosynthesis; L-tryptophan from chorismate: step 1/5. The protein operates within amino-acid biosynthesis; L-tryptophan biosynthesis; L-tryptophan from chorismate: step 3/5. It participates in amino-acid biosynthesis; L-tryptophan biosynthesis; L-tryptophan from chorismate: step 4/5. Trifunctional enzyme bearing the Gln amidotransferase (GATase) domain of anthranilate synthase, indole-glycerolphosphate synthase, and phosphoribosylanthranilate isomerase activities. This chain is Multifunctional tryptophan biosynthesis protein (trpC), found in Penicillium chrysogenum (Penicillium notatum).